Here is a 510-residue protein sequence, read N- to C-terminus: ATP synthase subunit alpha, chloroplastic (510 aa).

170 to 177 (GDRQTGKT) contributes to the ATP binding site.

It belongs to the ATPase alpha/beta chains family. As to quaternary structure, F-type ATPases have 2 components, CF(1) - the catalytic core - and CF(0) - the membrane proton channel. CF(1) has five subunits: alpha(3), beta(3), gamma(1), delta(1), epsilon(1). CF(0) has four main subunits: a, b, b' and c.

It is found in the plastid. Its subcellular location is the chloroplast thylakoid membrane. It catalyses the reaction ATP + H2O + 4 H(+)(in) = ADP + phosphate + 5 H(+)(out). Functionally, produces ATP from ADP in the presence of a proton gradient across the membrane. The alpha chain is a regulatory subunit. The sequence is that of ATP synthase subunit alpha, chloroplastic from Phaseolus vulgaris (Kidney bean).